A 298-amino-acid chain; its full sequence is METQRLRIAMQKSGRLSQDSQALFKSCGLKINLREQRLIAHVENMPIDILRVRDDDIPGLVMEGVVDLGIIGENVLEEVQLIRASQGQPFAVKTLKQLDFGGCRLSLAVPDDVTYTGPQSLAGKRIATSYPGLLKRFFDEKGLSFKSVMLGGSVEVAPRAGLADAICDLVSTGATLEANGLKEVEVIYRSKAVLVQAPNPLSDAKQKIIDTLLPRIQGMQQARESKYIMLHAPKDKLDAITDLLPGAERPTIMQLAGETNQVALHVVSSETLFWETMEQLKALGASSILVLPIEKMME.

It belongs to the ATP phosphoribosyltransferase family. Long subfamily. Mg(2+) is required as a cofactor.

It localises to the cytoplasm. The catalysed reaction is 1-(5-phospho-beta-D-ribosyl)-ATP + diphosphate = 5-phospho-alpha-D-ribose 1-diphosphate + ATP. It participates in amino-acid biosynthesis; L-histidine biosynthesis; L-histidine from 5-phospho-alpha-D-ribose 1-diphosphate: step 1/9. Feedback inhibited by histidine. In terms of biological role, catalyzes the condensation of ATP and 5-phosphoribose 1-diphosphate to form N'-(5'-phosphoribosyl)-ATP (PR-ATP). Has a crucial role in the pathway because the rate of histidine biosynthesis seems to be controlled primarily by regulation of HisG enzymatic activity. This Aeromonas hydrophila subsp. hydrophila (strain ATCC 7966 / DSM 30187 / BCRC 13018 / CCUG 14551 / JCM 1027 / KCTC 2358 / NCIMB 9240 / NCTC 8049) protein is ATP phosphoribosyltransferase.